The primary structure comprises 444 residues: Argininosuccinate synthase (444 aa).

Residues 17–25 (AFSGGLDTS) and alanine 43 contribute to the ATP site. Tyrosine 99 contributes to the L-citrulline binding site. Residues glycine 129 and threonine 131 each contribute to the ATP site. Threonine 131, asparagine 135, and aspartate 136 together coordinate L-aspartate. Asparagine 135 contributes to the L-citrulline binding site. Aspartate 136 serves as a coordination point for ATP. L-citrulline-binding residues include arginine 139 and serine 192. Residue aspartate 194 coordinates ATP. Threonine 201, glutamate 203, and glutamate 280 together coordinate L-citrulline.

It belongs to the argininosuccinate synthase family. Type 2 subfamily. Homotetramer.

It localises to the cytoplasm. The enzyme catalyses L-citrulline + L-aspartate + ATP = 2-(N(omega)-L-arginino)succinate + AMP + diphosphate + H(+). Its pathway is amino-acid biosynthesis; L-arginine biosynthesis; L-arginine from L-ornithine and carbamoyl phosphate: step 2/3. This is Argininosuccinate synthase from Delftia acidovorans (strain DSM 14801 / SPH-1).